The primary structure comprises 452 residues: Bifunctional protein GlmU (452 aa).

The tract at residues 1-233 (MTDRPFAALI…AWEVAGVNSR (233 aa)) is pyrophosphorylase. Residues 11-14 (LAAG), Lys25, Gln76, 81-82 (GT), 104-106 (YGD), Gly144, Glu159, Asn174, and Asn231 contribute to the UDP-N-acetyl-alpha-D-glucosamine site. Asp106 serves as a coordination point for Mg(2+). Position 231 (Asn231) interacts with Mg(2+). Residues 234 to 254 (AELAAVEAEWQRRRRLAAMAD) form a linker region. The N-acetyltransferase stretch occupies residues 255 to 452 (GATLIAPETV…AMKIKKAARK (198 aa)). Residues Arg320 and Lys338 each contribute to the UDP-N-acetyl-alpha-D-glucosamine site. The active-site Proton acceptor is the His350. Tyr353 and Asn364 together coordinate UDP-N-acetyl-alpha-D-glucosamine. Acetyl-CoA is bound by residues Ala367, 373–374 (NY), Ser392, Ala410, and Arg427.

It in the N-terminal section; belongs to the N-acetylglucosamine-1-phosphate uridyltransferase family. This sequence in the C-terminal section; belongs to the transferase hexapeptide repeat family. As to quaternary structure, homotrimer. It depends on Mg(2+) as a cofactor.

The protein localises to the cytoplasm. It carries out the reaction alpha-D-glucosamine 1-phosphate + acetyl-CoA = N-acetyl-alpha-D-glucosamine 1-phosphate + CoA + H(+). The enzyme catalyses N-acetyl-alpha-D-glucosamine 1-phosphate + UTP + H(+) = UDP-N-acetyl-alpha-D-glucosamine + diphosphate. Its pathway is nucleotide-sugar biosynthesis; UDP-N-acetyl-alpha-D-glucosamine biosynthesis; N-acetyl-alpha-D-glucosamine 1-phosphate from alpha-D-glucosamine 6-phosphate (route II): step 2/2. It participates in nucleotide-sugar biosynthesis; UDP-N-acetyl-alpha-D-glucosamine biosynthesis; UDP-N-acetyl-alpha-D-glucosamine from N-acetyl-alpha-D-glucosamine 1-phosphate: step 1/1. It functions in the pathway bacterial outer membrane biogenesis; LPS lipid A biosynthesis. In terms of biological role, catalyzes the last two sequential reactions in the de novo biosynthetic pathway for UDP-N-acetylglucosamine (UDP-GlcNAc). The C-terminal domain catalyzes the transfer of acetyl group from acetyl coenzyme A to glucosamine-1-phosphate (GlcN-1-P) to produce N-acetylglucosamine-1-phosphate (GlcNAc-1-P), which is converted into UDP-GlcNAc by the transfer of uridine 5-monophosphate (from uridine 5-triphosphate), a reaction catalyzed by the N-terminal domain. The sequence is that of Bifunctional protein GlmU from Rhizorhabdus wittichii (strain DSM 6014 / CCUG 31198 / JCM 15750 / NBRC 105917 / EY 4224 / RW1) (Sphingomonas wittichii).